We begin with the raw amino-acid sequence, 480 residues long: Protein nucleotidyltransferase YdiU (480 aa).

Gly-87, Gly-89, Arg-90, Lys-110, Asp-122, Gly-123, Arg-173, and Arg-180 together coordinate ATP. Residue Asp-245 is the Proton acceptor of the active site. The Mg(2+) site is built by Asn-246 and Asp-255. Position 255 (Asp-255) interacts with ATP.

This sequence belongs to the SELO family. The cofactor is Mg(2+). It depends on Mn(2+) as a cofactor.

It catalyses the reaction L-seryl-[protein] + ATP = 3-O-(5'-adenylyl)-L-seryl-[protein] + diphosphate. The enzyme catalyses L-threonyl-[protein] + ATP = 3-O-(5'-adenylyl)-L-threonyl-[protein] + diphosphate. It carries out the reaction L-tyrosyl-[protein] + ATP = O-(5'-adenylyl)-L-tyrosyl-[protein] + diphosphate. The catalysed reaction is L-histidyl-[protein] + UTP = N(tele)-(5'-uridylyl)-L-histidyl-[protein] + diphosphate. It catalyses the reaction L-seryl-[protein] + UTP = O-(5'-uridylyl)-L-seryl-[protein] + diphosphate. The enzyme catalyses L-tyrosyl-[protein] + UTP = O-(5'-uridylyl)-L-tyrosyl-[protein] + diphosphate. In terms of biological role, nucleotidyltransferase involved in the post-translational modification of proteins. It can catalyze the addition of adenosine monophosphate (AMP) or uridine monophosphate (UMP) to a protein, resulting in modifications known as AMPylation and UMPylation. In Jannaschia sp. (strain CCS1), this protein is Protein nucleotidyltransferase YdiU.